A 196-amino-acid polypeptide reads, in one-letter code: Putative archaetidylserine decarboxylase proenzyme (196 aa).

Serine 164 functions as the Schiff-base intermediate with substrate; via pyruvic acid in the catalytic mechanism. At serine 164 the chain carries Pyruvic acid (Ser); by autocatalysis.

This sequence belongs to the phosphatidylserine decarboxylase family. PSD-A subfamily. Heterodimer of a large membrane-associated beta subunit and a small pyruvoyl-containing alpha subunit. The cofactor is pyruvate. Is synthesized initially as an inactive proenzyme. Formation of the active enzyme involves a self-maturation process in which the active site pyruvoyl group is generated from an internal serine residue via an autocatalytic post-translational modification. Two non-identical subunits are generated from the proenzyme in this reaction, and the pyruvate is formed at the N-terminus of the alpha chain, which is derived from the carboxyl end of the proenzyme. The post-translation cleavage follows an unusual pathway, termed non-hydrolytic serinolysis, in which the side chain hydroxyl group of the serine supplies its oxygen atom to form the C-terminus of the beta chain, while the remainder of the serine residue undergoes an oxidative deamination to produce ammonia and the pyruvoyl prosthetic group on the alpha chain.

The protein localises to the cell membrane. It carries out the reaction archaetidylserine + H(+) = archaetidylethanolamine + CO2. Its function is as follows. Catalyzes the formation of archaetidylethanolamine (PtdEtn) from archaetidylserine (PtdSer). The protein is Putative archaetidylserine decarboxylase proenzyme of Halobacterium salinarum (strain ATCC 700922 / JCM 11081 / NRC-1) (Halobacterium halobium).